Consider the following 294-residue polypeptide: uncharacterized protein (294 aa).

Disordered regions lie at residues 1–148 (MFLR…LEKP) and 268–294 (DEAATDWESEGLEREGEEQRGDPGKGL). A phosphoserine mark is found at serine 34 and serine 35. A compositionally biased stretch (low complexity) spans 35–44 (SSENSGSDWD). Over residues 52 to 62 (DVGHPKTKDSG) the composition is skewed to basic and acidic residues. Phosphoserine occurs at positions 71 and 90. 2 stretches are compositionally biased toward basic and acidic residues: residues 73 to 92 (PSKEEPQVEQLGSKRMDSLK) and 278 to 294 (GLEREGEEQRGDPGKGL).

This is an uncharacterized protein from Homo sapiens (Human).